We begin with the raw amino-acid sequence, 299 residues long: F-actin-capping protein subunit alpha-3 (299 aa).

2 positions are modified to phosphoserine: S2 and S290.

The protein belongs to the F-actin-capping protein alpha subunit family. Component of the F-actin capping complex, composed of a heterodimer of an alpha and a beta subunit. Component of the WASH complex, composed of F-actin-capping protein subunit alpha (CAPZA1, CAPZA2 or CAPZA3), F-actin-capping protein subunit beta (CAPZB), WASHC1, WASHC2, WASHC3, WASHC4 and WASHC5. In terms of tissue distribution, exclusively expressed in the testis.

The protein localises to the cytoplasm. It localises to the cytoskeleton. F-actin-capping proteins bind in a Ca(2+)-independent manner to the fast growing ends of actin filaments (barbed end) thereby blocking the exchange of subunits at these ends. Unlike other capping proteins (such as gelsolin and severin), these proteins do not sever actin filaments. May play a role in the morphogenesis of spermatid. The chain is F-actin-capping protein subunit alpha-3 (Capza3) from Rattus norvegicus (Rat).